The primary structure comprises 327 residues: ABC transporter periplasmic-binding protein YphF (327 aa).

A signal peptide spans 1-26 (MPTKMRTTRNLLLMATLLGSALFARA).

Belongs to the bacterial solute-binding protein 2 family.

It is found in the periplasm. Its function is as follows. Probably part of the binding-protein-dependent transport system YphDEF. The protein is ABC transporter periplasmic-binding protein YphF (yphF) of Escherichia coli (strain K12).